Consider the following 199-residue polypeptide: Probable GTP-binding protein EngB (199 aa).

The EngB-type G domain occupies 28–199; sequence DLPEIALAGR…DSWDAILEQV (172 aa). GTP contacts are provided by residues 36–43, 63–67, 81–84, 148–151, and 180–182; these read GRSNVGKS, GKTQL, DVPG, TKAD, and FSS. Mg(2+) is bound by residues Ser43 and Thr65.

It belongs to the TRAFAC class TrmE-Era-EngA-EngB-Septin-like GTPase superfamily. EngB GTPase family. It depends on Mg(2+) as a cofactor.

Functionally, necessary for normal cell division and for the maintenance of normal septation. The polypeptide is Probable GTP-binding protein EngB (Streptococcus pyogenes serotype M1).